Consider the following 701-residue polypeptide: Glycine--tRNA ligase beta subunit (701 aa).

Belongs to the class-II aminoacyl-tRNA synthetase family. As to quaternary structure, tetramer of two alpha and two beta subunits.

The protein localises to the cytoplasm. It catalyses the reaction tRNA(Gly) + glycine + ATP = glycyl-tRNA(Gly) + AMP + diphosphate. This chain is Glycine--tRNA ligase beta subunit, found in Helicobacter pylori (strain G27).